Here is a 658-residue protein sequence, read N- to C-terminus: Carnitine O-palmitoyltransferase 2, mitochondrial (658 aa).

A mitochondrion-targeting transit peptide spans 1-25; the sequence is MMPRLLFRAWPRCPSLVLGAPSRPL. At 26-178 the chain is on the mitochondrial matrix side; that stretch reads SAVSGPDDYL…GLLEPEVFHL (153 aa). An N6-succinyllysine mark is found at K69 and K85. An intramembrane region (note=Mitochondrial inner membrane) is located at residues 179–208; it reads NPSKSDTDAFKRLIRFVPPSLSWYGAYLVN. Topologically, residues 209–658 are mitochondrial matrix; the sequence is AYPLDMSQYF…DALEGKAIKT (450 aa). Position 239 is an N6-acetyllysine; alternate (K239). K239 bears the N6-succinyllysine; alternate mark. K305 is modified (N6-acetyllysine). Catalysis depends on H372, which acts as the Proton acceptor. 2 positions are modified to N6-succinyllysine: K424 and K439. 452-464 contributes to the CoA binding site; it reads GKEFLKKKQLSPD. Positions 486, 488, and 499 each coordinate (R)-carnitine. N6-acetyllysine; alternate occurs at positions 510 and 544. N6-succinyllysine; alternate occurs at positions 510 and 544.

This sequence belongs to the carnitine/choline acetyltransferase family.

The protein localises to the mitochondrion inner membrane. It carries out the reaction (R)-carnitine + hexadecanoyl-CoA = O-hexadecanoyl-(R)-carnitine + CoA. The catalysed reaction is octanoyl-CoA + (R)-carnitine = O-octanoyl-(R)-carnitine + CoA. The enzyme catalyses decanoyl-CoA + (R)-carnitine = O-decanoyl-(R)-carnitine + CoA. It catalyses the reaction dodecanoyl-CoA + (R)-carnitine = O-dodecanoyl-R-carnitine + CoA. It carries out the reaction tetradecanoyl-CoA + (R)-carnitine = O-tetradecanoyl-(R)-carnitine + CoA. The catalysed reaction is (R)-carnitine + octadecanoyl-CoA = O-octadecanoyl-(R)-carnitine + CoA. The enzyme catalyses eicosanoyl-CoA + (R)-carnitine = O-eicosanoyl-(R)-carnitine + CoA. It catalyses the reaction (9Z)-tetradecenoyl-CoA + (R)-carnitine = O-(9Z)-tetradecenoyl-(R)-carnitine + CoA. It carries out the reaction (5Z)-tetradecenoyl-CoA + (R)-carnitine = O-(5Z)-tetradecenoyl-(R)-carnitine + CoA. The catalysed reaction is (R)-carnitine + (9Z)-octadecenoyl-CoA = O-(9Z)-octadecenoyl-(R)-carnitine + CoA. The enzyme catalyses 4,8-dimethylnonanoyl-CoA + (R)-carnitine = O-4,8-dimethylnonanoyl-(R)-carnitine + CoA. Its pathway is lipid metabolism; fatty acid beta-oxidation. Functionally, involved in the intramitochondrial synthesis of acylcarnitines from accumulated acyl-CoA metabolites. Reconverts acylcarnitines back into the respective acyl-CoA esters that can then undergo beta-oxidation, an essential step for the mitochondrial uptake of long-chain fatty acids and their subsequent beta-oxidation in the mitochondrion. Active with medium (C8-C12) and long-chain (C14-C18) acyl-CoA esters. This is Carnitine O-palmitoyltransferase 2, mitochondrial from Rattus norvegicus (Rat).